Consider the following 151-residue polypeptide: Myosin light polypeptide 6 (151 aa).

An N-acetylcysteine modification is found at Cys2. EF-hand domains are found at residues 7–42 (EQTA…LGQN), 84–119 (GCFE…LGEK), and 119–151 (KMTE…VLSG).

In terms of assembly, myosin is a hexamer of 2 heavy chains and 4 light chains.

In terms of biological role, regulatory light chain of myosin. Does not bind calcium. This Gallus gallus (Chicken) protein is Myosin light polypeptide 6 (MYL6).